We begin with the raw amino-acid sequence, 367 residues long: UDP-N-acetylglucosamine--N-acetylmuramyl-(pentapeptide) pyrophosphoryl-undecaprenol N-acetylglucosamine transferase (367 aa).

Residues 15 to 17 (TGG), Asn-127, Arg-163, Ser-191, Ile-249, and Gln-294 contribute to the UDP-N-acetyl-alpha-D-glucosamine site.

This sequence belongs to the glycosyltransferase 28 family. MurG subfamily.

It is found in the cell inner membrane. It carries out the reaction di-trans,octa-cis-undecaprenyl diphospho-N-acetyl-alpha-D-muramoyl-L-alanyl-D-glutamyl-meso-2,6-diaminopimeloyl-D-alanyl-D-alanine + UDP-N-acetyl-alpha-D-glucosamine = di-trans,octa-cis-undecaprenyl diphospho-[N-acetyl-alpha-D-glucosaminyl-(1-&gt;4)]-N-acetyl-alpha-D-muramoyl-L-alanyl-D-glutamyl-meso-2,6-diaminopimeloyl-D-alanyl-D-alanine + UDP + H(+). It functions in the pathway cell wall biogenesis; peptidoglycan biosynthesis. Its function is as follows. Cell wall formation. Catalyzes the transfer of a GlcNAc subunit on undecaprenyl-pyrophosphoryl-MurNAc-pentapeptide (lipid intermediate I) to form undecaprenyl-pyrophosphoryl-MurNAc-(pentapeptide)GlcNAc (lipid intermediate II). The chain is UDP-N-acetylglucosamine--N-acetylmuramyl-(pentapeptide) pyrophosphoryl-undecaprenol N-acetylglucosamine transferase from Burkholderia cenocepacia (strain HI2424).